We begin with the raw amino-acid sequence, 92 residues long: Long neurotoxin 1 (92 aa).

Positions methionine 1 to threonine 21 are cleaved as a signal peptide. Disulfide bonds link cysteine 24–cysteine 42, cysteine 35–cysteine 63, cysteine 67–cysteine 79, and cysteine 80–cysteine 85.

Belongs to the three-finger toxin family. Long-chain subfamily. Type II alpha-neurotoxin sub-subfamily. As to expression, expressed by the venom gland.

It is found in the secreted. Its function is as follows. Binds with high affinity to muscular (alpha-1/CHRNA1) and neuronal (alpha-7/CHRNA7) nicotinic acetylcholine receptor (nAChR) and inhibits acetylcholine from binding to the receptor, thereby impairing neuromuscular and neuronal transmission. This Oxyuranus scutellatus scutellatus (Australian taipan) protein is Long neurotoxin 1.